The following is a 348-amino-acid chain: Fructose-1,6-bisphosphatase class 1 (348 aa).

Glutamate 92, aspartate 111, leucine 113, and aspartate 114 together coordinate Mg(2+). Residues 114-117 (DGSS) and asparagine 204 each bind substrate. Glutamate 276 provides a ligand contact to Mg(2+).

Belongs to the FBPase class 1 family. Homotetramer. Mg(2+) serves as cofactor.

It localises to the cytoplasm. It catalyses the reaction beta-D-fructose 1,6-bisphosphate + H2O = beta-D-fructose 6-phosphate + phosphate. It functions in the pathway carbohydrate biosynthesis; gluconeogenesis. The polypeptide is Fructose-1,6-bisphosphatase class 1 (Methylorubrum populi (strain ATCC BAA-705 / NCIMB 13946 / BJ001) (Methylobacterium populi)).